The following is a 420-amino-acid chain: Exodeoxyribonuclease 7 large subunit (420 aa).

The protein belongs to the XseA family. As to quaternary structure, heterooligomer composed of large and small subunits.

The protein resides in the cytoplasm. The catalysed reaction is Exonucleolytic cleavage in either 5'- to 3'- or 3'- to 5'-direction to yield nucleoside 5'-phosphates.. In terms of biological role, bidirectionally degrades single-stranded DNA into large acid-insoluble oligonucleotides, which are then degraded further into small acid-soluble oligonucleotides. The polypeptide is Exodeoxyribonuclease 7 large subunit (Helicobacter pylori (strain ATCC 700392 / 26695) (Campylobacter pylori)).